A 277-amino-acid polypeptide reads, in one-letter code: Inhibition of morphological differentiation protein (277 aa).

3 residues coordinate Mg(2+): aspartate 18, aspartate 20, and aspartate 192.

The protein belongs to the HAD-like hydrolase superfamily. SerB family.

The protein is Inhibition of morphological differentiation protein of Streptomyces azureus.